We begin with the raw amino-acid sequence, 259 residues long: Ubiquinone biosynthesis protein COQ4 homolog, mitochondrial (259 aa).

Zn(2+) contacts are provided by histidine 162, aspartate 163, histidine 166, and glutamate 178.

The protein belongs to the COQ4 family. As to quaternary structure, component of a multi-subunit COQ enzyme complex. The cofactor is Zn(2+).

Its subcellular location is the mitochondrion inner membrane. The catalysed reaction is a 4-hydroxy-3-methoxy-5-(all-trans-polyprenyl)benzoate + H(+) = a 2-methoxy-6-(all-trans-polyprenyl)phenol + CO2. It participates in cofactor biosynthesis; ubiquinone biosynthesis. Its function is as follows. Lyase that catalyzes the C1-decarboxylation of 4-hydroxy-3-methoxy-5-(all-trans-polyprenyl)benzoic acid into 2-methoxy-6-(all-trans-polyprenyl)phenol during ubiquinone biosynthesis. The protein is Ubiquinone biosynthesis protein COQ4 homolog, mitochondrial of Bombyx mori (Silk moth).